Consider the following 150-residue polypeptide: UPF0178 protein DMR_20710 (150 aa).

Belongs to the UPF0178 family.

The polypeptide is UPF0178 protein DMR_20710 (Solidesulfovibrio magneticus (strain ATCC 700980 / DSM 13731 / RS-1) (Desulfovibrio magneticus)).